Reading from the N-terminus, the 235-residue chain is tRNA (guanine-N(1)-)-methyltransferase (235 aa).

Residues G112 and 132–137 (IGDYVI) each bind S-adenosyl-L-methionine.

It belongs to the RNA methyltransferase TrmD family. In terms of assembly, homodimer.

It localises to the cytoplasm. It catalyses the reaction guanosine(37) in tRNA + S-adenosyl-L-methionine = N(1)-methylguanosine(37) in tRNA + S-adenosyl-L-homocysteine + H(+). Functionally, specifically methylates guanosine-37 in various tRNAs. The polypeptide is tRNA (guanine-N(1)-)-methyltransferase (Anaplasma marginale (strain St. Maries)).